The following is a 224-amino-acid chain: tRNA pseudouridine synthase B (224 aa).

The active-site Nucleophile is Asp46.

This sequence belongs to the pseudouridine synthase TruB family. Type 1 subfamily.

The catalysed reaction is uridine(55) in tRNA = pseudouridine(55) in tRNA. Responsible for synthesis of pseudouridine from uracil-55 in the psi GC loop of transfer RNAs. In Methylococcus capsulatus (strain ATCC 33009 / NCIMB 11132 / Bath), this protein is tRNA pseudouridine synthase B.